The primary structure comprises 432 residues: Asparagine--tRNA ligase 2 (432 aa).

The protein belongs to the class-II aminoacyl-tRNA synthetase family. As to quaternary structure, homodimer.

It localises to the cytoplasm. The enzyme catalyses tRNA(Asn) + L-asparagine + ATP = L-asparaginyl-tRNA(Asn) + AMP + diphosphate + H(+). The polypeptide is Asparagine--tRNA ligase 2 (asnS2) (Lactiplantibacillus plantarum (strain ATCC BAA-793 / NCIMB 8826 / WCFS1) (Lactobacillus plantarum)).